A 325-amino-acid chain; its full sequence is BES1/BZR1 homolog protein 4 (325 aa).

The tract at residues 1-21 (MTSGTRMPTWRERENNKRRER) is disordered. Residues 6-89 (RMPTWREREN…RMEIGGGSAT (84 aa)) are required for DNA-binding. T169 is modified (phosphothreonine). Residues 304-325 (ERIHEESGSDDLELTLGNSSTR) are disordered.

It belongs to the BZR/LAT61 family. Post-translationally, phosphorylated. Phosphorylation increases protein degradation.

In Arabidopsis thaliana (Mouse-ear cress), this protein is BES1/BZR1 homolog protein 4 (BEH4).